A 251-amino-acid polypeptide reads, in one-letter code: Triosephosphate isomerase (251 aa).

9 to 11 (NWK) contacts substrate. His-94 (electrophile) is an active-site residue. Residue Glu-163 is the Proton acceptor of the active site. Residues Gly-169, Ser-209, and 230–231 (GG) each bind substrate.

The protein belongs to the triosephosphate isomerase family. As to quaternary structure, homodimer.

The protein localises to the cytoplasm. The catalysed reaction is D-glyceraldehyde 3-phosphate = dihydroxyacetone phosphate. It participates in carbohydrate biosynthesis; gluconeogenesis. Its pathway is carbohydrate degradation; glycolysis; D-glyceraldehyde 3-phosphate from glycerone phosphate: step 1/1. Its function is as follows. Involved in the gluconeogenesis. Catalyzes stereospecifically the conversion of dihydroxyacetone phosphate (DHAP) to D-glyceraldehyde-3-phosphate (G3P). This Dehalococcoides mccartyi (strain ATCC BAA-2266 / KCTC 15142 / 195) (Dehalococcoides ethenogenes (strain 195)) protein is Triosephosphate isomerase.